Here is a 199-residue protein sequence, read N- to C-terminus: Prolactin (199 aa).

A disulfide bond links cysteine 4 and cysteine 11. Phosphoserine is present on residues serine 26, serine 34, and serine 90. 2 cysteine pairs are disulfide-bonded: cysteine 58/cysteine 174 and cysteine 191/cysteine 199.

Belongs to the somatotropin/prolactin family. As to quaternary structure, interacts with PRLR.

It localises to the secreted. Functionally, prolactin acts primarily on the mammary gland by promoting lactation. In Loxodonta africana (African elephant), this protein is Prolactin (PRL).